The primary structure comprises 206 residues: Large ribosomal subunit protein uL4 (206 aa).

Residues 42–54 (RRQQGTHQSQGRS) are compositionally biased toward polar residues. The interval 42-93 (RRQQGTHQSQGRSDVSRTGAKMFKQKGTGRARHSSARAPQFRGGGKAHGPVV) is disordered. Residues 64–76 (FKQKGTGRARHSS) are compositionally biased toward basic residues.

It belongs to the universal ribosomal protein uL4 family. Part of the 50S ribosomal subunit.

One of the primary rRNA binding proteins, this protein initially binds near the 5'-end of the 23S rRNA. It is important during the early stages of 50S assembly. It makes multiple contacts with different domains of the 23S rRNA in the assembled 50S subunit and ribosome. Its function is as follows. Forms part of the polypeptide exit tunnel. The protein is Large ribosomal subunit protein uL4 of Bartonella henselae (strain ATCC 49882 / DSM 28221 / CCUG 30454 / Houston 1) (Rochalimaea henselae).